The sequence spans 208 residues: MTDSNNQSPNKKTSGSSGAPTAADGRQENRRSRGEKRGGRRDRRGQERDSEWQERVVQIRRVSKTVKGGKKMSFRAIVVVGNEKGQVGVGVGKAGDVIGAVRKGVADGKKHLVRVPLTRNSSIPTLSNGRDGAASVLIRPAAPGTGVIAGGSIRTVLELAGIKNVLAKRLGSKTPLNNARAAMVALSELRTHKATAKERGISLEQIYS.

A compositionally biased stretch (polar residues) spans 1–19 (MTDSNNQSPNKKTSGSSGA). A disordered region spans residues 1 to 54 (MTDSNNQSPNKKTSGSSGAPTAADGRQENRRSRGEKRGGRRDRRGQERDSEWQE). Basic and acidic residues-rich tracts occupy residues 25-37 (GRQE…GEKR) and 44-54 (RGQERDSEWQE). One can recognise an S5 DRBM domain in the interval 52–115 (WQERVVQIRR…ADGKKHLVRV (64 aa)).

It belongs to the universal ribosomal protein uS5 family. Part of the 30S ribosomal subunit. Contacts proteins S4 and S8.

Its function is as follows. With S4 and S12 plays an important role in translational accuracy. Located at the back of the 30S subunit body where it stabilizes the conformation of the head with respect to the body. This is Small ribosomal subunit protein uS5 from Prochlorococcus marinus (strain NATL1A).